A 244-amino-acid chain; its full sequence is Glutathione S-transferase theta-2 (244 aa).

The region spanning 2–82 is the GST N-terminal domain; it reads GLELYLDLLS…YLSSKYQVAD (81 aa). Residues 40–41, 53–54, 66–67, and 104–107 contribute to the glutathione site; these read HL, KV, ES, and DNIR. Residues 88–230 enclose the GST C-terminal domain; it reads DLQARAQVHE…AKKTLPVPPP (143 aa).

Belongs to the GST superfamily. Theta family. In terms of assembly, homodimer. As to expression, highest values found in liver followed by testis, adrenal gland, kidney, lung, brain and skeletal muscle. In liver, highest expression found in central vein limiting plate hepatocytes. In lung, expressed mainly in club cells of the bronchiolar epithelium and, at low levels, in type II alveolar cells.

The protein resides in the cytoplasm. Its subcellular location is the cytosol. It localises to the nucleus. The catalysed reaction is RX + glutathione = an S-substituted glutathione + a halide anion + H(+). Functionally, catalyzes the inactivation of reactive sulfate esters in carcinogenic arylmethanols. Highest activity towards ethacrynic acid and cumene hydroperoxide. In Rattus norvegicus (Rat), this protein is Glutathione S-transferase theta-2 (Gstt2).